The following is a 928-amino-acid chain: Protein naked cuticle (928 aa).

The span at 68 to 80 (IITTPPGNASGAG) shows a compositional bias: polar residues. Residues 68–133 (IITTPPGNAS…SNGKHGKYSN (66 aa)) form a disordered region. The segment covering 84-101 (QSHHQTNHHSSGRSHPGH) has biased composition (basic residues). The segment covering 120–133 (ISSTSNGKHGKYSN) has biased composition (polar residues). The interval 177-253 (EFTCDVSVEG…TVSPEGKSKS (77 aa)) is interaction with dsh. In terms of domain architecture, EF-hand spans 188-224 (KSSQPLQFSFTFYDLDGHHGKITKDDIVGIVYTIYES). The tract at residues 227 to 372 (KSVVVPHCGS…ARYHQKNNSR (146 aa)) is important for binding to zinc. 5 disordered regions span residues 291 to 368 (GVGS…YHQK), 462 to 543 (VGND…KSAE), 578 to 600 (NVSPIRQPAAQQQPQQQQRQRCN), 614 to 668 (PVAQ…HPQP), and 779 to 825 (LQQK…GSKI). The segment covering 307-317 (RRQHRYRPRKL) has biased composition (basic residues). Phosphoserine occurs at positions 320, 327, and 329. The span at 353–368 (GKSHHHQSQSARYHQK) shows a compositional bias: basic residues. Polar residues predominate over residues 484-493 (QPQSLNHKSA). A compositionally biased stretch (low complexity) spans 525–538 (HQHQQQNQQQQQQQ). The tract at residues 543-572 (ECWKSALNRNDLISIIRESMEKNRLCFQLN) is required for nuclear localization and inhibition of Wnt signaling. 2 stretches are compositionally biased toward low complexity: residues 583–598 (RQPAAQQQPQQQQRQR) and 624–649 (SPPTAEPTTPSIPAAPPAIEVNGQQH). A compositionally biased stretch (basic residues) spans 650 to 663 (HPTHPTHPSHHNHH). A compositionally biased stretch (basic and acidic residues) spans 802-811 (QPKDASRSEQ). A compositionally biased stretch (polar residues) spans 812–822 (RPPTSNSSSAG).

It belongs to the NKD family. Interacts with dsh. This interaction may be stabilized by zinc.

It localises to the cell membrane. Its subcellular location is the cytoplasm. The protein localises to the nucleus. Functionally, cell autonomous antagonist of the canonical Wnt signaling pathway. May activate a second Wnt signaling pathway that controls planar cell polarity. Required for neuroblast specification. In Drosophila melanogaster (Fruit fly), this protein is Protein naked cuticle (nkd).